The following is a 746-amino-acid chain: Chitin biosynthesis protein CHS6 (746 aa).

The segment at 1-25 is disordered; that stretch reads MNLFWPSETKKQNEIPGGDYTPGNS. The segment at 734–746 is CHS5-binding; sequence LAWIADLDHTVQP.

It belongs to the CHAPS family. In terms of assembly, component of the CHS5/6 complex composed of the 4 CHAPS proteins BCH1, BCH2, BUD7, and CHS6 as well as at least CHS5 and GTP-bound ARF1. The complex interacts with the cargo protein CHS3.

Its subcellular location is the golgi apparatus. It localises to the trans-Golgi network membrane. In terms of biological role, member of the CHS5-ARF1P-binding proteins (CHAPS) which mediates export of specific cargo proteins, including chitin synthase CHS3. This chain is Chitin biosynthesis protein CHS6 (CHS6), found in Saccharomyces cerevisiae (strain ATCC 204508 / S288c) (Baker's yeast).